The chain runs to 371 residues: Glycerate kinase (371 aa).

The protein belongs to the glycerate kinase type-1 family.

The catalysed reaction is (R)-glycerate + ATP = (2R)-3-phosphoglycerate + ADP + H(+). The chain is Glycerate kinase (glxK) from Neisseria meningitidis serogroup B (strain ATCC BAA-335 / MC58).